We begin with the raw amino-acid sequence, 73 residues long: Large ribosomal subunit protein bL31 (73 aa).

Positions 16, 18, 38, and 41 each coordinate Zn(2+).

It belongs to the bacterial ribosomal protein bL31 family. Type A subfamily. In terms of assembly, part of the 50S ribosomal subunit. Requires Zn(2+) as cofactor.

Functionally, binds the 23S rRNA. The protein is Large ribosomal subunit protein bL31 of Vibrio parahaemolyticus serotype O3:K6 (strain RIMD 2210633).